We begin with the raw amino-acid sequence, 311 residues long: Putative protease MJ0651 (311 aa).

Serine 128 serves as the catalytic Nucleophile. Lysine 180 serves as the catalytic Proton donor/acceptor.

Belongs to the peptidase S49 family.

The chain is Putative protease MJ0651 from Methanocaldococcus jannaschii (strain ATCC 43067 / DSM 2661 / JAL-1 / JCM 10045 / NBRC 100440) (Methanococcus jannaschii).